A 434-amino-acid polypeptide reads, in one-letter code: MKELFLSLFTVKDLRNKFLFTLFVLFLFRVGSYLPIPGIDSVALKSYFKSQSDFSIANYFDFFSGGAFSNFSIFMLSIGPYISASIIVQLLVYSFPSLKKMQEGDGGRQKTKKYTKYLTIVAAVVQGYATSLYAKGIPGAVTIPFYRYIFVAILTVTTGTFILLWFGEQINQRGVGNGTSLIIFSGIVVRLQAALFNLFQSMQDPSQNVNPVFVILIISIFILVVILIIYEYKAQMRIAIHYARANSNNTVSSYLPIKLNPSGVLPVIFASVLITLPLQILSGFAETSSIARQILSYLRPNGFYYTFLNVILIIGFTYFYSKIQLSPKDISNNIRKNGGTIPGIKSDEMEKYLDEIMNKTLFSGSIFLSIIAIIPFLVQNIFRFPHDVSRIMGGSSLLIMVGVALDTLIHIDAYLKTQGFSHGNKKNYAFLQKI.

10 consecutive transmembrane segments (helical) span residues 19-39, 73-93, 117-137, 148-168, 179-199, 209-229, 264-284, 300-320, 362-382, and 391-411; these read LFTL…IPGI, IFML…LLVY, YLTI…AKGI, YIFV…WFGE, TSLI…FNLF, VNPV…ILII, VLPV…LSGF, PNGF…TYFY, FSGS…QNIF, and IMGG…LIHI.

The protein belongs to the SecY/SEC61-alpha family. In terms of assembly, component of the Sec protein translocase complex. Heterotrimer consisting of SecY, SecE and SecG subunits. The heterotrimers can form oligomers, although 1 heterotrimer is thought to be able to translocate proteins. Interacts with the ribosome. Interacts with SecDF, and other proteins may be involved. Interacts with SecA.

The protein resides in the cell inner membrane. Functionally, the central subunit of the protein translocation channel SecYEG. Consists of two halves formed by TMs 1-5 and 6-10. These two domains form a lateral gate at the front which open onto the bilayer between TMs 2 and 7, and are clamped together by SecE at the back. The channel is closed by both a pore ring composed of hydrophobic SecY resides and a short helix (helix 2A) on the extracellular side of the membrane which forms a plug. The plug probably moves laterally to allow the channel to open. The ring and the pore may move independently. In Borreliella burgdorferi (strain ATCC 35210 / DSM 4680 / CIP 102532 / B31) (Borrelia burgdorferi), this protein is Protein translocase subunit SecY.